The chain runs to 336 residues: DNA polymerase III subunit delta' (336 aa).

In terms of assembly, DNA polymerase III contains a core (composed of alpha, epsilon and theta chains) that associates with a tau subunit. This core dimerizes to form the POLIII' complex. PolIII' associates with the gamma complex (composed of gamma, delta, delta', psi and chi chains) and with the beta chain to form the complete DNA polymerase III complex.

It carries out the reaction DNA(n) + a 2'-deoxyribonucleoside 5'-triphosphate = DNA(n+1) + diphosphate. In terms of biological role, DNA polymerase III is a complex, multichain enzyme responsible for most of the replicative synthesis in bacteria. This DNA polymerase also exhibits 3' to 5' exonuclease activity. The sequence is that of DNA polymerase III subunit delta' (holB) from Buchnera aphidicola subsp. Baizongia pistaciae (strain Bp).